We begin with the raw amino-acid sequence, 88 residues long: Small integral membrane protein 13 (88 aa).

Residues 10–30 traverse the membrane as a helical segment; it reads LVFVATLLIVLLLMVCGWYFV. Over residues 48–61 the composition is skewed to polar residues; sequence TGSQEGDNEQPSGS. A disordered region spans residues 48–88; it reads TGSQEGDNEQPSGSETEEDPSASPQKIRSARQRRPPVDAGH. Phosphoserine occurs at positions 59 and 61. T63 bears the Phosphothreonine mark. S70 carries the phosphoserine modification.

This sequence belongs to the SMIM13 family.

The protein localises to the membrane. The polypeptide is Small integral membrane protein 13 (Smim13) (Mus musculus (Mouse)).